A 472-amino-acid polypeptide reads, in one-letter code: Zinc finger imprinted 3 (472 aa).

Residues 8–80 (VTFEDVTVNF…EEEVLGSGRA (73 aa)) form the KRAB domain. 11 consecutive C2H2-type zinc fingers follow at residues 167–189 (LKCNACRKLFSSKSRLQSHLRRH), 195–217 (FECHSCGRAFGEKWKLDKHQKTH), 223–245 (YKCENCGNAYKQKSNLFQHQKMH), 251–273 (YQCKTCGKAFSWKSSCINHEKIH), 279–301 (YQCNECEKSFRQNSTLIQHKKVH), 307–329 (FQCTDCGKAFIYKSDLVKHQRIH), 335–357 (YKCSICEKAFSQKSNVIDHEKIH), 363–385 (YECDLCGNTFIQKKNLIQHKKIH), 391–413 (YECNRCGKAFFQKSNLHSHQKTH), 419–441 (YRCSECGKTFIRKLNLSLHKKTH), and 447–470 (YGCSECGKAFADRSYLVRHQKRIH).

Belongs to the krueppel C2H2-type zinc-finger protein family.

The protein resides in the nucleus. In terms of biological role, may be involved in transcriptional regulation. This Homo sapiens (Human) protein is Zinc finger imprinted 3 (ZIM3).